The following is a 247-amino-acid chain: C-type lectin domain family 7 member A (247 aa).

Residues 1 to 44 (MEYHPDLENLDEDGYTQLHFDSRSNTRIAVVSEKGSCVASPPWR) lie on the Cytoplasmic side of the membrane. An ITAM-like motif is present at residues 15 to 18 (YTQL). The helical; Signal-anchor for type II membrane protein transmembrane segment at 45–65 (LIAVILGILCLVILVIAVVLG) threads the bilayer. The Extracellular portion of the chain corresponds to 66–247 (TMAIWRPNSG…CSICEKKFSM (182 aa)). Positions 81-105 (NGYFPSRNKENHSQPTQSPLEESVT) are disordered. A glycan (N-linked (GlcNAc...) asparagine) is linked at asparagine 91. A compositionally biased stretch (polar residues) spans 93-105 (SQPTQSPLEESVT). 3 disulfides stabilise this stretch: cysteine 120–cysteine 131, cysteine 148–cysteine 241, and cysteine 220–cysteine 233. In terms of domain architecture, C-type lectin spans 127–242 (YEKSCYLFSP…CSVPSCSICE (116 aa)). (1,3-beta-D-glucosyl)n is bound at residue 146–153 (RQCSQLGS). 3 residues coordinate a divalent metal cation: lysine 157, aspartate 159, and glutamate 163. (1,3-beta-D-glucosyl)n is bound at residue glutamate 195. Glutamate 242 lines the a divalent metal cation pocket.

As to quaternary structure, homodimer. Interacts with SYK; participates in leukocyte activation in presence of fungal pathogens. Interacts with CD37; this interaction controls CLEC7A-mediated IL-6 production. Post-translationally, phosphorylated on tyrosine residues in response to beta-glucan binding. In terms of tissue distribution, detected in dendritic cells, in paracortical and medullary regions of lymph nodes, and in spleen red pulp and white pulp.

The protein localises to the cell membrane. Its function is as follows. Lectin that functions as a pattern recognizing receptor (PRR) specific for beta-1,3-linked and beta-1,6-linked glucans, which constitute cell wall constituents from pathogenic bacteria and fungi. Necessary for the TLR2-mediated inflammatory response and activation of NF-kappa-B: upon beta-glucan binding, recruits SYK via its ITAM motif and promotes a signaling cascade that activates some CARD domain-BCL10-MALT1 (CBM) signalosomes, leading to the activation of NF-kappa-B and MAP kinase p38 (MAPK11, MAPK12, MAPK13 and/or MAPK14) pathways which stimulate expression of genes encoding pro-inflammatory cytokines and chemokines. Enhances cytokine production in macrophages and dendritic cells. Mediates production of reactive oxygen species in the cell. Mediates phagocytosis of C.albicans conidia. Binds T-cells in a way that does not involve their surface glycans and plays a role in T-cell activation. Stimulates T-cell proliferation. Induces phosphorylation of SCIMP after binding beta-glucans. This chain is C-type lectin domain family 7 member A (CLEC7A), found in Macaca mulatta (Rhesus macaque).